We begin with the raw amino-acid sequence, 267 residues long: MKTIAAYLVLVFYASTALSESISENLAWNKEFSSESVHGVFVLCKSSSNSCTTNNAARASTAYIPASTFKIPNALIGLETGAIKDERQVFKWDGKPRAMKQWEKDLKLRGAIQVSAVPVFQQIAREVGEIRMQKYLNLFSYGNANIGGGIDKFWLEGQLRISAFNQVKFLESLYLNNLPASKANQLIVKEAIVTEATPEYIVHSKTGYSGVGTESSPGVAWWVGWVEKGTEVYFFAFNMDIDNESKLPSRKSISTKIMASEGIIIGG.

The first 19 residues, 1-19 (MKTIAAYLVLVFYASTALS), serve as a signal peptide directing secretion. The Acyl-ester intermediate role is filled by serine 67. Position 70 is an N6-carboxylysine (lysine 70). 205–207 (KTG) is a binding site for substrate.

It belongs to the class-D beta-lactamase family.

It catalyses the reaction a beta-lactam + H2O = a substituted beta-amino acid. With respect to regulation, inhibited by clavulanic acid. In terms of biological role, hydrolyzes both oxacillin and methicillin. The sequence is that of Beta-lactamase OXA-5 (bla) from Pseudomonas aeruginosa.